Reading from the N-terminus, the 436-residue chain is 3-ketoacyl-CoA thiolase (436 aa).

Residue Cys99 is the Acyl-thioester intermediate of the active site. Residues His392 and Cys422 each act as proton acceptor in the active site.

This sequence belongs to the thiolase-like superfamily. Thiolase family. In terms of assembly, heterotetramer of two alpha chains (FadJ) and two beta chains (FadI).

It is found in the cytoplasm. It catalyses the reaction an acyl-CoA + acetyl-CoA = a 3-oxoacyl-CoA + CoA. It participates in lipid metabolism; fatty acid beta-oxidation. Functionally, catalyzes the final step of fatty acid oxidation in which acetyl-CoA is released and the CoA ester of a fatty acid two carbons shorter is formed. The chain is 3-ketoacyl-CoA thiolase from Enterobacter sp. (strain 638).